The chain runs to 280 residues: Thymidylate synthase (280 aa).

Arginine 21 is a dUMP binding site. (6R)-5,10-methylene-5,6,7,8-tetrahydrofolate is bound at residue histidine 51. 142 to 143 is a binding site for dUMP; that stretch reads RR. Residue cysteine 162 is the Nucleophile of the active site. DUMP contacts are provided by residues 182 to 185, asparagine 193, and 223 to 225; these read RSAD and HLY. Aspartate 185 contacts (6R)-5,10-methylene-5,6,7,8-tetrahydrofolate. Alanine 279 serves as a coordination point for (6R)-5,10-methylene-5,6,7,8-tetrahydrofolate.

It belongs to the thymidylate synthase family. Bacterial-type ThyA subfamily. In terms of assembly, homodimer.

It localises to the cytoplasm. It carries out the reaction dUMP + (6R)-5,10-methylene-5,6,7,8-tetrahydrofolate = 7,8-dihydrofolate + dTMP. It participates in pyrimidine metabolism; dTTP biosynthesis. Functionally, catalyzes the reductive methylation of 2'-deoxyuridine-5'-monophosphate (dUMP) to 2'-deoxythymidine-5'-monophosphate (dTMP) while utilizing 5,10-methylenetetrahydrofolate (mTHF) as the methyl donor and reductant in the reaction, yielding dihydrofolate (DHF) as a by-product. This enzymatic reaction provides an intracellular de novo source of dTMP, an essential precursor for DNA biosynthesis. The protein is Thymidylate synthase of Acinetobacter baumannii (strain AB307-0294).